Reading from the N-terminus, the 113-residue chain is UPF0122 protein MGAS10270_Spy1030 (113 aa).

The protein belongs to the UPF0122 family.

In terms of biological role, might take part in the signal recognition particle (SRP) pathway. This is inferred from the conservation of its genetic proximity to ftsY/ffh. May be a regulatory protein. This Streptococcus pyogenes serotype M2 (strain MGAS10270) protein is UPF0122 protein MGAS10270_Spy1030.